A 428-amino-acid polypeptide reads, in one-letter code: MKQDRSSALFQQARQSIPGGVNSPVRAFKSVGSDPLFIQSASGCTITDVDGNTFIDYVGSWGPMIVGHCHPQVVEAVRQAAGSGASFGAPTEREITLANMVIDAVPSIEMVRMVSSGTEATMSAIRLARGYTGRDNIIKFSGCYHGHADSLLVRAGSGAATFGIPDSPGVPADFAKHTLTAEFNSLDSVRQLVADNPESIACIIVEPVAGNMGTVPPRDGFLEGLRQICSNEGIVLIFDEVMTGFRVAYGGAQERYGVTPDMTTLGKIIGGGLPVGAFGGRREIMEMLSPSGSVYQAGTLSGNPLAMSAGIATLSLLKQPGFYESLEEKSRHLAEGITDAARLAGYPIQTTRVGSMFCAFFSGQEVYDWAGASGCDTAAFAAYFKAMLNEGIYLAPSQFETAFVSAAHTDADIEATIRAAARCFKLIS.

Lys267 is modified (N6-(pyridoxal phosphate)lysine).

Belongs to the class-III pyridoxal-phosphate-dependent aminotransferase family. HemL subfamily. In terms of assembly, homodimer. It depends on pyridoxal 5'-phosphate as a cofactor.

It localises to the cytoplasm. It carries out the reaction (S)-4-amino-5-oxopentanoate = 5-aminolevulinate. It participates in porphyrin-containing compound metabolism; protoporphyrin-IX biosynthesis; 5-aminolevulinate from L-glutamyl-tRNA(Glu): step 2/2. This Pelobacter propionicus (strain DSM 2379 / NBRC 103807 / OttBd1) protein is Glutamate-1-semialdehyde 2,1-aminomutase.